Here is a 49-residue protein sequence, read N- to C-terminus: Large ribosomal subunit protein bL33 (49 aa).

It belongs to the bacterial ribosomal protein bL33 family.

The chain is Large ribosomal subunit protein bL33 from Streptococcus suis (strain 98HAH33).